A 702-amino-acid polypeptide reads, in one-letter code: MDLSLRVALCLSMLALCLAIQKEKQVRWCVKSNSELKKCKDLVDTCKNKEIKLSCVEKSNTDECFTAIQEDHADAICVDGGDVYKGSLQPYNLKPIMAENYGSHTETDTCYYAVAVVKKSSKFTFDELKDKKSCHTGIGKTAGWNIIIGLLLEKKLLKWAGPDSETLEKAVSKFFKASCVPGAKEPKLCQLCAGIKEHKCSRSNNEPYYNYAGAFKCLQDDQGDVAFVKQSTVPEEFHKDYELLCPDNTRKSIKEYKNCNLAKVPAHAVLTRVRDDKSKDIIEFLQEAQKTQECKLFSSPYGKDLIFKDSAVSLIPLPSSMDSFLFLGADYSNAIQALKEGVKEDDSAAQVKVRWCTQSKAEKTKCDDWTTISGGAIECTEASTAEECIVQILKGDADAVTLDGGYMYTAGLCGLVPVMGEYYDQDDLTPCQRSSSQAKGVYYAVAIVKKGTQVSWSNLRGVKTCHTAVGRTAGWNIPVGLITSETGNCDFASYVGESCAPGSDVKSNLCALCIGDPEKLSESAKKCSPSASEAYYGYSGAFRCLVEKGQVGFAKHTTVFENTDGKNPAGWAKDLKSEDFELLCPDGSRAPVTDYKKCNLAEVPAHAVVTLPDKREQVAKIVVNQQSLYGRKGFQKDIFQMFQSTGGKDLLFKDSTQCLLEIPSKTTMQEFLGDKYHTAVTSLNKCSTSKSGLLAACTFHSC.

The N-terminal stretch at 1-19 (MDLSLRVALCLSMLALCLA) is a signal peptide. 2 consecutive Transferrin-like domains span residues 26-340 (VRWC…ALKE) and 353-685 (VRWC…SLNK). Disulfide bonds link cysteine 29–cysteine 64 and cysteine 39–cysteine 55. Fe(3+) is bound by residues aspartate 79 and tyrosine 111. Intrachain disulfides connect cysteine 134–cysteine 217, cysteine 179–cysteine 192, and cysteine 245–cysteine 259. 4 residues coordinate hydrogencarbonate: threonine 136, lysine 140, alanine 142, and glycine 143. Tyrosine 211 lines the Fe(3+) pocket. Histidine 267 provides a ligand contact to Fe(3+). The connecting region stretch occupies residues 340–349 (EGVKEDDSAA). Disulfide bonds link cysteine 356–cysteine 388 and cysteine 366–cysteine 379. Residues aspartate 403 and tyrosine 442 each coordinate Fe(3+). Cystine bridges form between cysteine 413-cysteine 697, cysteine 431-cysteine 658, cysteine 465-cysteine 544, cysteine 489-cysteine 686, cysteine 499-cysteine 513, cysteine 510-cysteine 527, and cysteine 584-cysteine 598. Residues threonine 467, arginine 471, alanine 473, and glycine 474 each coordinate hydrogencarbonate. Tyrosine 538 provides a ligand contact to Fe(3+). Residue histidine 606 participates in Fe(3+) binding.

Belongs to the transferrin family. Monomer. Plasma.

It is found in the secreted. In terms of biological role, transferrins are iron binding transport proteins which can bind two Fe(3+) ions in association with the binding of an anion, usually bicarbonate. It is responsible for the transport of iron from sites of absorption and heme degradation to those of storage and utilization. Serum transferrin may also have a further role in stimulating cell proliferation. The protein is Serotransferrin-A (tf-a) of Xenopus laevis (African clawed frog).